Reading from the N-terminus, the 287-residue chain is Aquaporin PIP1-2 (287 aa).

The disordered stretch occupies residues 1 to 37 (MEGKEEDVRLGANKFTERQPIGTAAQSQDKDYKEPPP). The Cytoplasmic portion of the chain corresponds to 1 to 55 (MEGKEEDVRLGANKFTERQPIGTAAQSQDKDYKEPPPAPLFEPGELSSWSFYRAG). The helical transmembrane segment at 56-76 (IAEFVATFLFLYITILTVMGV) threads the bilayer. The Extracellular segment spans residues 77 to 89 (VKSSTKCSTVGIQ). Residues 90-110 (GIAWAFGGMIFALVYCTAGIS) traverse the membrane as a helical segment. At 111–133 (GGHINPAVTFGLFLARKLSLTRA) the chain is on the cytoplasmic side. Positions 115–117 (NPA) match the NPA 1 motif. Residues 134 to 154 (LFYMVMQCLGAICGAGVVKGF) form a helical membrane-spanning segment. The Extracellular segment spans residues 155–175 (QKGLYENNGGGANVVAPGYTK). Residues 176–196 (GDGLGAEIVGTFILVYTVFSA) traverse the membrane as a helical segment. Residues 197–209 (TDAKRSARDSHVP) are Cytoplasmic-facing. The chain crosses the membrane as a helical span at residues 210-230 (ILAPLPIGFAVFLVHLATIPI). Residues 231–257 (TGTGINPARSLGAAIIYNKGHAWDDHW) lie on the Extracellular side of the membrane. The NPA 2 signature appears at 236-238 (NPA). The chain crosses the membrane as a helical span at residues 258–278 (IFWVGPFIGAALAALYHQVVI). The Cytoplasmic portion of the chain corresponds to 279–287 (RAIPFKSRS).

Belongs to the MIP/aquaporin (TC 1.A.8) family. PIP (TC 1.A.8.11) subfamily. Barely detectable in roots, leaves and fruits.

Its subcellular location is the cell membrane. Water channel required to facilitate the transport of water across cell membrane; mercury-insensitive. Contributes to the tolerance to multiple abiotic stresses including salt (NaCl), cold and water deprivation, by modulating cytosolic K(+)/Na(+) ratio, maintaining osmotic balance, and reducing membrane injury (e.g. oxidative injury). This is Aquaporin PIP1-2 from Musa acuminata subsp. malaccensis (Wild banana).